The primary structure comprises 404 residues: Probable protein phosphatase 1N (404 aa).

A PPM-type phosphatase domain is found at 59-319 (RFGASAVQGW…DNMTCMVVCF (261 aa)). 4 residues coordinate Mn(2+): D96, G97, D267, and D310.

It belongs to the PP2C family. Mg(2+) is required as a cofactor. Requires Mn(2+) as cofactor.

The enzyme catalyses O-phospho-L-seryl-[protein] + H2O = L-seryl-[protein] + phosphate. The catalysed reaction is O-phospho-L-threonyl-[protein] + H2O = L-threonyl-[protein] + phosphate. The sequence is that of Probable protein phosphatase 1N (Ppm1n) from Mus musculus (Mouse).